A 334-amino-acid polypeptide reads, in one-letter code: Cathepsin J (334 aa).

The signal sequence occupies residues 1–17 (MTPAVFLVILCFGVASG). A propeptide spans 18 to 113 (APARDPNLDA…PSAQKQVSIG (96 aa)) (activation peptide). Cys-138 is a catalytic residue. Asn-217, Asn-221, and Asn-268 each carry an N-linked (GlcNAc...) asparagine glycan. Cys-269 and Cys-322 are joined by a disulfide. His-276 is an active-site residue. A glycan (N-linked (GlcNAc...) asparagine) is linked at Asn-288. Asn-300 is an active-site residue.

This sequence belongs to the peptidase C1 family. Expressed specifically in placenta.

It is found in the lysosome. In Rattus norvegicus (Rat), this protein is Cathepsin J (Ctsj).